The chain runs to 210 residues: Proteasome subunit beta (210 aa).

Residues 1-7 (MEVLKTG) constitute a propeptide, removed in mature form; by autocatalysis. Thr8 (nucleophile) is an active-site residue.

The protein belongs to the peptidase T1B family. As to quaternary structure, the 20S proteasome core is composed of 14 alpha and 14 beta subunits that assemble into four stacked heptameric rings, resulting in a barrel-shaped structure. The two inner rings, each composed of seven catalytic beta subunits, are sandwiched by two outer rings, each composed of seven alpha subunits. The catalytic chamber with the active sites is on the inside of the barrel. Has a gated structure, the ends of the cylinder being occluded by the N-termini of the alpha-subunits. Is capped at one or both ends by the proteasome regulatory ATPase, PAN.

It is found in the cytoplasm. It catalyses the reaction Cleavage of peptide bonds with very broad specificity.. With respect to regulation, the formation of the proteasomal ATPase PAN-20S proteasome complex, via the docking of the C-termini of PAN into the intersubunit pockets in the alpha-rings, triggers opening of the gate for substrate entry. Interconversion between the open-gate and close-gate conformations leads to a dynamic regulation of the 20S proteasome proteolysis activity. Its function is as follows. Component of the proteasome core, a large protease complex with broad specificity involved in protein degradation. The chain is Proteasome subunit beta from Picrophilus torridus (strain ATCC 700027 / DSM 9790 / JCM 10055 / NBRC 100828 / KAW 2/3).